The sequence spans 89 residues: Small ribosomal subunit protein uS15 (89 aa).

This sequence belongs to the universal ribosomal protein uS15 family. In terms of assembly, part of the 30S ribosomal subunit. Forms a bridge to the 50S subunit in the 70S ribosome, contacting the 23S rRNA.

Its function is as follows. One of the primary rRNA binding proteins, it binds directly to 16S rRNA where it helps nucleate assembly of the platform of the 30S subunit by binding and bridging several RNA helices of the 16S rRNA. Forms an intersubunit bridge (bridge B4) with the 23S rRNA of the 50S subunit in the ribosome. This is Small ribosomal subunit protein uS15 from Corynebacterium diphtheriae (strain ATCC 700971 / NCTC 13129 / Biotype gravis).